Consider the following 454-residue polypeptide: Cobyrinate a,c-diamide synthase (454 aa).

One can recognise a GATase cobBQ-type domain in the interval 244–440 (RLGIAKDKAF…LHVHFYQNPK (197 aa)). The active-site Nucleophile is the C326.

The protein belongs to the CobB/CbiA family. It depends on Mg(2+) as a cofactor.

The enzyme catalyses cob(II)yrinate + 2 L-glutamine + 2 ATP + 2 H2O = cob(II)yrinate a,c diamide + 2 L-glutamate + 2 ADP + 2 phosphate + 2 H(+). Its pathway is cofactor biosynthesis; adenosylcobalamin biosynthesis; cob(II)yrinate a,c-diamide from sirohydrochlorin (anaerobic route): step 10/10. Functionally, catalyzes the ATP-dependent amidation of the two carboxylate groups at positions a and c of cobyrinate, using either L-glutamine or ammonia as the nitrogen source. This Limosilactobacillus reuteri subsp. reuteri (strain JCM 1112) (Lactobacillus reuteri) protein is Cobyrinate a,c-diamide synthase.